The primary structure comprises 187 residues: NADH-dependent FMN reductase SfnF (187 aa).

It belongs to the SsuE family.

It catalyses the reaction FMNH2 + NAD(+) = FMN + NADH + 2 H(+). Functionally, involved in the dimethyl sulfide degradation pathway. Catalyzes the NADH-dependent reduction of FMN. This is NADH-dependent FMN reductase SfnF from Pseudomonas fluorescens (strain Pf0-1).